Consider the following 115-residue polypeptide: Holo-[acyl-carrier-protein] synthase (115 aa).

Mg(2+) is bound by residues Asp8 and Glu50.

This sequence belongs to the P-Pant transferase superfamily. AcpS family. The cofactor is Mg(2+).

It localises to the cytoplasm. It catalyses the reaction apo-[ACP] + CoA = holo-[ACP] + adenosine 3',5'-bisphosphate + H(+). Transfers the 4'-phosphopantetheine moiety from coenzyme A to a Ser of acyl-carrier-protein. The chain is Holo-[acyl-carrier-protein] synthase from Arthrobacter sp. (strain FB24).